The chain runs to 436 residues: 3-ketoacyl-CoA thiolase (436 aa).

The active-site Acyl-thioester intermediate is Cys-99. Catalysis depends on proton acceptor residues His-392 and Cys-422.

Belongs to the thiolase-like superfamily. Thiolase family. As to quaternary structure, heterotetramer of two alpha chains (FadJ) and two beta chains (FadI).

Its subcellular location is the cytoplasm. It carries out the reaction an acyl-CoA + acetyl-CoA = a 3-oxoacyl-CoA + CoA. Its pathway is lipid metabolism; fatty acid beta-oxidation. Catalyzes the final step of fatty acid oxidation in which acetyl-CoA is released and the CoA ester of a fatty acid two carbons shorter is formed. This Serratia proteamaculans (strain 568) protein is 3-ketoacyl-CoA thiolase.